The primary structure comprises 300 residues: MKQITIASRESKLALWQTNFVKNRIQSELNIPCEISTMKTQGDIILDQPLNKIGGKALFMKELEVAILSNKADIAVHSLKDVPYQLPQGFCLAGFMPREDPRDAFVSNKYNSIDDLPKGAVVGTSSLRRKAQLLHYRDDLEIRDLRGNIQTRLSKLDNGDYDAIILASAGLIRLELVERITQFIPVEISLPAVGQGIVVIEALERDNDLLEKIQKLNCRESSRVATAERAFNQELKGGCHVAIGAYAELDNNQITLMAMVASSDGKKILKRKMIGDDPTKLGKLLAQEMIALGAYKILES.

C239 is modified (S-(dipyrrolylmethanemethyl)cysteine).

This sequence belongs to the HMBS family. As to quaternary structure, monomer. The cofactor is dipyrromethane.

The catalysed reaction is 4 porphobilinogen + H2O = hydroxymethylbilane + 4 NH4(+). It functions in the pathway porphyrin-containing compound metabolism; protoporphyrin-IX biosynthesis; coproporphyrinogen-III from 5-aminolevulinate: step 2/4. Its function is as follows. Tetrapolymerization of the monopyrrole PBG into the hydroxymethylbilane pre-uroporphyrinogen in several discrete steps. The protein is Porphobilinogen deaminase of Francisella tularensis subsp. holarctica (strain OSU18).